Here is a 381-residue protein sequence, read N- to C-terminus: 5-cytosine rRNA methyltransferase NSUN4 (381 aa).

The transit peptide at 1–25 directs the protein to the mitochondrion; it reads MAAPVLRCVRKLLKLVDFTPVPRRY. Residues Gly-182, Gly-183, Lys-184, and Asp-201 each coordinate S-adenosyl-L-methionine. A Phosphoserine modification is found at Ser-203. Arg-206, Asp-234, Gly-235, and Asp-252 together coordinate S-adenosyl-L-methionine. Cys-307 (nucleophile) is an active-site residue.

It belongs to the class I-like SAM-binding methyltransferase superfamily. RsmB/NOP family. In terms of assembly, heterodimer with MTERFD2/MTERF4; this interaction seems to be required for NSUN4 recruitment to the mitochondrial large ribosomal subunit.

It localises to the mitochondrion. The enzyme catalyses a cytidine in rRNA + S-adenosyl-L-methionine = a 5-methylcytidine in rRNA + S-adenosyl-L-homocysteine + H(+). It catalyses the reaction a cytidine in mRNA + S-adenosyl-L-methionine = a 5-methylcytidine in mRNA + S-adenosyl-L-homocysteine + H(+). Mitochondrial RNA cytosine C(5)-methyltransferase that methylates cytosine to 5-methylcytosine (m5C) in various RNAs, such as rRNAs, mRNAs and some long non-coding RNAs (lncRNAs). Involved in mitochondrial ribosome small subunit (SSU) maturation by catalyzing methylation of mitochondrial 12S rRNA; the function is independent of MTERFD2/MTERF4 and assembled mitochondrial ribosome large subunit (LSU). Targeted to LSU by MTERFD2/MTERF4 and probably is involved in a final step in ribosome biogenesis to ensure that SSU and LSU are assembled. In vitro can methylate 16S rRNA of the LSU; the methylation is enhanced by MTERFD/MTERF4. Also acts as a regulator of innate immunity by marking double-stranded mitochondrial RNAs(mt-dsRNAs) generated in response to stress: catalyzes m5C modification on mitochondrial RNAs, such as a mRNAs and lncRNAs, with a preference for the termini of light-strand lncRNAs, promoting their degradation and cytosolic release. Modified light-strand lncRNAs are then recognized by C1QBP reader and recruited to the mitochondrial degradosome complex, which promotes their degradation. The polypeptide is 5-cytosine rRNA methyltransferase NSUN4 (Mus musculus (Mouse)).